The chain runs to 308 residues: Ribosomal protein uL3 glutamine methyltransferase (308 aa).

This sequence belongs to the protein N5-glutamine methyltransferase family. PrmB subfamily.

It carries out the reaction L-glutaminyl-[ribosomal protein uL3] + S-adenosyl-L-methionine = N(5)-methyl-L-glutaminyl-[ribosomal protein uL3] + S-adenosyl-L-homocysteine + H(+). In terms of biological role, methylates large ribosomal subunit protein uL3 on a specific glutamine residue. In Xanthomonas campestris pv. campestris (strain ATCC 33913 / DSM 3586 / NCPPB 528 / LMG 568 / P 25), this protein is Ribosomal protein uL3 glutamine methyltransferase.